The sequence spans 1034 residues: Putative beta-glucuronidase (1034 aa).

E432 functions as the Proton donor in the catalytic mechanism. The CBM6 domain maps to 909 to 1034 (VDISAEEGVL…GPFIDELFID (126 aa)).

The protein belongs to the glycosyl hydrolase 2 family.

The protein resides in the cytoplasm. It catalyses the reaction a beta-D-glucuronoside + H2O = D-glucuronate + an alcohol. Its function is as follows. Glycoside hydrolase that may be involved in ulvan degradation. Ulvan is the main polysaccharide component of the Ulvales (green seaweed) cell wall. It is composed of disaccharide building blocks comprising 3-sulfated rhamnose (Rha3S) linked to D-glucuronic acid (GlcA), L-iduronic acid (IduA), or D-xylose (Xyl). This is Putative beta-glucuronidase from Formosa agariphila (strain DSM 15362 / KCTC 12365 / LMG 23005 / KMM 3901 / M-2Alg 35-1).